A 256-amino-acid chain; its full sequence is Triosephosphate isomerase (256 aa).

12–14 (NWK) is a binding site for substrate. His-99 serves as the catalytic Electrophile. The active-site Proton acceptor is the Glu-171. Substrate contacts are provided by residues Gly-177, Ser-217, and 238-239 (GG).

This sequence belongs to the triosephosphate isomerase family. As to quaternary structure, homodimer.

The protein localises to the cytoplasm. The enzyme catalyses D-glyceraldehyde 3-phosphate = dihydroxyacetone phosphate. It functions in the pathway carbohydrate biosynthesis; gluconeogenesis. It participates in carbohydrate degradation; glycolysis; D-glyceraldehyde 3-phosphate from glycerone phosphate: step 1/1. Involved in the gluconeogenesis. Catalyzes stereospecifically the conversion of dihydroxyacetone phosphate (DHAP) to D-glyceraldehyde-3-phosphate (G3P). This is Triosephosphate isomerase from Rubrobacter xylanophilus (strain DSM 9941 / JCM 11954 / NBRC 16129 / PRD-1).